Reading from the N-terminus, the 121-residue chain is SLFELGKMILQETGKNPAKSYGAYYCYCGWGGQGQPKDATDRCCYVHKCCYKKLTGCNPKKDRYSYSWKDKTIVCGENNSCLKELCECDKAVAICLRENLNTYNKKYRYYLKPLCKKADAC.

7 disulfides stabilise this stretch: Cys26–Cys115, Cys28–Cys44, Cys43–Cys95, Cys49–Cys121, Cys50–Cys88, Cys57–Cys81, and Cys75–Cys86. Positions 105–117 are important for membrane-damaging activities in eukaryotes and bacteria; heparin-binding; the sequence is KKYRYYLKPLCKK.

This sequence belongs to the phospholipase A2 family. Group II subfamily. K49 sub-subfamily. As to quaternary structure, homodimer; non-covalently linked. In terms of tissue distribution, expressed by the venom gland.

It is found in the secreted. Functionally, snake venom phospholipase A2 homolog that lacks enzymatic activity. Is myotoxic and displays edema-inducing activities. In vitro, produced time-dependent, irreversible neuromuscular blockade in isolated mouse phrenic nerve-diaphragm and chick biventer cervicis preparations. A model of myotoxic mechanism has been proposed: an apo Lys49-PLA2 is activated by the entrance of a hydrophobic molecule (e.g. fatty acid) at the hydrophobic channel of the protein leading to a reorientation of a monomer. This reorientation causes a transition between 'inactive' to 'active' states, causing alignment of C-terminal and membrane-docking sites (MDoS) side-by-side and putting the membrane-disruption sites (MDiS) in the same plane, exposed to solvent and in a symmetric position for both monomers. The MDoS region stabilizes the toxin on membrane by the interaction of charged residues with phospholipid head groups. Subsequently, the MDiS region destabilizes the membrane with penetration of hydrophobic residues. This insertion causes a disorganization of the membrane, allowing an uncontrolled influx of ions (i.e. calcium and sodium), and eventually triggering irreversible intracellular alterations and cell death. The sequence is that of Basic phospholipase A2 homolog BaTX from Bothrops alternatus (Urutu).